The following is a 520-amino-acid chain: Bifunctional dihydrofolate reductase-thymidylate synthase (520 aa).

Residues 26 to 229 (AFSIVVALDM…LEFEICKYVP (204 aa)) enclose the DHFR domain. Valine 30 provides a ligand contact to substrate. NADP(+) is bound by residues alanine 32 and 38-44 (GIGDGES). Substrate is bound at residue aspartate 52. Residues 81-83 (RKT), 102-105 (LSSK), and 157-164 (GGAQVYAD) contribute to the NADP(+) site. The substrate site is built by tyrosine 162 and threonine 180. The interval 234 to 520 (ERQYLELIDR…HPAIKMEMAV (287 aa)) is thymidylate synthase. Position 254 (arginine 254) interacts with dUMP. The active site involves cysteine 400. Residues histidine 401, 421 to 425 (QRSCD), asparagine 433, and 463 to 465 (HVY) contribute to the dUMP site.

The protein in the N-terminal section; belongs to the dihydrofolate reductase family. It in the C-terminal section; belongs to the thymidylate synthase family.

It carries out the reaction (6S)-5,6,7,8-tetrahydrofolate + NADP(+) = 7,8-dihydrofolate + NADPH + H(+). The enzyme catalyses dUMP + (6R)-5,10-methylene-5,6,7,8-tetrahydrofolate = 7,8-dihydrofolate + dTMP. Its pathway is cofactor biosynthesis; tetrahydrofolate biosynthesis; 5,6,7,8-tetrahydrofolate from 7,8-dihydrofolate: step 1/1. In terms of biological role, bifunctional enzyme. Involved in de novo dTMP biosynthesis. Key enzyme in folate metabolism. Catalyzes an essential reaction for de novo glycine and purine synthesis, DNA precursor synthesis, and for the conversion of dUMP to dTMP. This Leishmania major protein is Bifunctional dihydrofolate reductase-thymidylate synthase.